A 435-amino-acid chain; its full sequence is Adenylosuccinate synthetase (435 aa).

Residues 17-23 (GDEGKGK) and 45-47 (GHT) contribute to the GTP site. The active-site Proton acceptor is the Asp18. Positions 18 and 45 each coordinate Mg(2+). IMP contacts are provided by residues 18-21 (DEGK), 43-46 (NAGH), Thr134, Arg148, Gln229, Thr244, and Arg308. Residue His46 is the Proton donor of the active site. A substrate-binding site is contributed by 304-310 (SVTGRPR). Residues Arg310, 336–338 (KLD), and 418–420 (STG) each bind GTP.

Belongs to the adenylosuccinate synthetase family. Homodimer. Mg(2+) is required as a cofactor.

The protein localises to the cytoplasm. It catalyses the reaction IMP + L-aspartate + GTP = N(6)-(1,2-dicarboxyethyl)-AMP + GDP + phosphate + 2 H(+). It participates in purine metabolism; AMP biosynthesis via de novo pathway; AMP from IMP: step 1/2. Its function is as follows. Plays an important role in the de novo pathway of purine nucleotide biosynthesis. Catalyzes the first committed step in the biosynthesis of AMP from IMP. This chain is Adenylosuccinate synthetase, found in Bordetella pertussis (strain Tohama I / ATCC BAA-589 / NCTC 13251).